The chain runs to 247 residues: Phosphonates import ATP-binding protein PhnC (247 aa).

An ABC transporter domain is found at 5-246 (IEVKNLVKNY…EDDIRKVYQT (242 aa)). 37–44 (GESGAGKS) lines the ATP pocket.

This sequence belongs to the ABC transporter superfamily. Phosphonates importer (TC 3.A.1.9.1) family. The complex is composed of two ATP-binding proteins (PhnC), two transmembrane proteins (PhnE) and a solute-binding protein (PhnD).

It localises to the cell inner membrane. The enzyme catalyses phosphonate(out) + ATP + H2O = phosphonate(in) + ADP + phosphate + H(+). Part of the ABC transporter complex PhnCDE involved in phosphonates import. Responsible for energy coupling to the transport system. In Fusobacterium nucleatum subsp. nucleatum (strain ATCC 25586 / DSM 15643 / BCRC 10681 / CIP 101130 / JCM 8532 / KCTC 2640 / LMG 13131 / VPI 4355), this protein is Phosphonates import ATP-binding protein PhnC.